The chain runs to 335 residues: UPF0353 protein MAV335 (335 aa).

Transmembrane regions (helical) follow at residues 18-38 (WFFL…LMQL) and 67-87 (LPAI…AGPT). Residues 98–295 (VVMLVIDVSQ…QELKSVYATL (198 aa)) form the VWFA domain. A helical membrane pass occupies residues 309 to 329 (SVGWVRLGALVLRLAADALLI).

Belongs to the UPF0353 family.

Its subcellular location is the cell membrane. The polypeptide is UPF0353 protein MAV335 (Mycobacterium avium).